Here is a 266-residue protein sequence, read N- to C-terminus: Undecaprenyl-diphosphatase 1 (266 aa).

8 helical membrane-spanning segments follow: residues 1–21 (MSII…FLPI), 39–59 (QGLA…VIYF), 83–103 (SKLG…GLLL), 113–133 (SAWV…YADA), 141–161 (IYQL…VAMI), 189–209 (FLLA…ELAL), 218–238 (TLLL…YMFL), and 244–264 (MGML…IVFL).

This sequence belongs to the UppP family.

The protein localises to the cell inner membrane. The enzyme catalyses di-trans,octa-cis-undecaprenyl diphosphate + H2O = di-trans,octa-cis-undecaprenyl phosphate + phosphate + H(+). Catalyzes the dephosphorylation of undecaprenyl diphosphate (UPP). Confers resistance to bacitracin. This chain is Undecaprenyl-diphosphatase 1, found in Pseudoalteromonas translucida (strain TAC 125).